The sequence spans 432 residues: GRAM domain-containing protein 2B (432 aa).

At Met-1 the chain carries N-acetylmethionine. 2 disordered regions span residues 1–61 (MTEL…SPDQ) and 74–106 (DGASLASDKNDCKTESKNDPKTERKKSSSSSQY). Composition is skewed to basic and acidic residues over residues 9–39 (EDTKPAKVLGKRESKLGSAHSEAENGVEEKK) and 81–99 (DKNDCKTESKNDPKTERKK). The GRAM domain occupies 110-177 (MHFHKLFLSV…FSVTLIKKTK (68 aa)). Over residues 220 to 233 (TSVGNSPNPSSAEN) the composition is skewed to polar residues. A disordered region spans residues 220–239 (TSVGNSPNPSSAENSFRADR). 3 positions are modified to phosphoserine: Ser-225, Ser-242, and Ser-252. Residues 262 to 285 (RQDMEGYSSSGSQTPESENSRDFH) are disordered. A compositionally biased stretch (polar residues) spans 268–278 (YSSSGSQTPES).

This chain is GRAM domain-containing protein 2B (GRAMD2B), found in Homo sapiens (Human).